The chain runs to 360 residues: Photosystem II protein D1 1 (360 aa).

The next 3 helical transmembrane spans lie at 29–46 (YVGW…AATV), 118–133 (HFLI…QWEL), and 142–156 (WICV…SATA). Chlorophyll a is bound at residue H118. Y126 contacts pheophytin a. [CaMn4O5] cluster-binding residues include D170 and E189. The helical transmembrane segment at 197–218 (FHMLGVAGVFGGSLFSAMHGSL) threads the bilayer. Position 198 (H198) interacts with chlorophyll a. Residues H215 and 264–265 (SF) contribute to the a quinone site. Residue H215 coordinates Fe cation. H272 provides a ligand contact to Fe cation. Residues 274–288 (FLAAWPVIGIWFTAL) form a helical membrane-spanning segment. Residues H332, E333, D342, and A344 each coordinate [CaMn4O5] cluster. Positions 345 to 360 (AGEVAPVALTAPAING) are excised as a propeptide.

It belongs to the reaction center PufL/M/PsbA/D family. In terms of assembly, PSII is composed of 1 copy each of membrane proteins PsbA, PsbB, PsbC, PsbD, PsbE, PsbF, PsbH, PsbI, PsbJ, PsbK, PsbL, PsbM, PsbT, PsbX, PsbY, PsbZ, Psb30/Ycf12, peripheral proteins PsbO, CyanoQ (PsbQ), PsbU, PsbV and a large number of cofactors. It forms dimeric complexes. It depends on The D1/D2 heterodimer binds P680, chlorophylls that are the primary electron donor of PSII, and subsequent electron acceptors. It shares a non-heme iron and each subunit binds pheophytin, quinone, additional chlorophylls, carotenoids and lipids. D1 provides most of the ligands for the Mn4-Ca-O5 cluster of the oxygen-evolving complex (OEC). There is also a Cl(-1) ion associated with D1 and D2, which is required for oxygen evolution. The PSII complex binds additional chlorophylls, carotenoids and specific lipids. as a cofactor. In terms of processing, tyr-161 forms a radical intermediate that is referred to as redox-active TyrZ, YZ or Y-Z. Post-translationally, C-terminally processed by CtpA; processing is essential to allow assembly of the oxygen-evolving complex and thus photosynthetic growth.

It localises to the cellular thylakoid membrane. The enzyme catalyses 2 a plastoquinone + 4 hnu + 2 H2O = 2 a plastoquinol + O2. In terms of biological role, photosystem II (PSII) is a light-driven water:plastoquinone oxidoreductase that uses light energy to abstract electrons from H(2)O, generating O(2) and a proton gradient subsequently used for ATP formation. It consists of a core antenna complex that captures photons, and an electron transfer chain that converts photonic excitation into a charge separation. The D1/D2 (PsbA/PsbD) reaction center heterodimer binds P680, the primary electron donor of PSII as well as several subsequent electron acceptors. This chain is Photosystem II protein D1 1, found in Nostoc sp. (strain PCC 7120 / SAG 25.82 / UTEX 2576).